The sequence spans 435 residues: Trigger factor (435 aa).

In terms of domain architecture, PPIase FKBP-type spans 183–263; it reads GDFINVDVTI…VKTIWQGNMP (81 aa).

It belongs to the FKBP-type PPIase family. Tig subfamily.

It is found in the cytoplasm. It catalyses the reaction [protein]-peptidylproline (omega=180) = [protein]-peptidylproline (omega=0). Involved in protein export. Acts as a chaperone by maintaining the newly synthesized protein in an open conformation. Functions as a peptidyl-prolyl cis-trans isomerase. This chain is Trigger factor, found in Protochlamydia amoebophila (strain UWE25).